Reading from the N-terminus, the 227-residue chain is DHVGSYGIVVYQSPGDIGQYTFEFDGDELFYVDLDKKETIWMLPEFAQLRSFDPQGGLQNIATGKHNLGVLTKRSNSTPATNEAPQATVFPKSPVLLGQPNTLICFVDNIFPPVINITWLRNSKSVADGVYETSFFVNRDYSFHKLSYLTFIPSDDDIYDCKVEHWGLEEPVLKHWEPEIPAPMSELTETVVCALGLSVGLVGIVVGTIFIIQGLRSGGTSRHPGPL.

The interval 1–82 (DHVGSYGIVV…KRSNSTPATN (82 aa)) is alpha-1. Topologically, residues 1–189 (DHVGSYGIVV…IPAPMSELTE (189 aa)) are extracellular. The alpha-2 stretch occupies residues 83 to 176 (EAPQATVFPK…GLEEPVLKHW (94 aa)). The region spanning 85–177 (PQATVFPKSP…LEEPVLKHWE (93 aa)) is the Ig-like C1-type domain. C105 and C161 are oxidised to a cystine. A glycan (N-linked (GlcNAc...) asparagine) is linked at N116. Residues 177-189 (EPEIPAPMSELTE) are connecting peptide. A helical transmembrane segment spans residues 190 to 215 (TVVCALGLSVGLVGIVVGTIFIIQGL). The Cytoplasmic portion of the chain corresponds to 216–227 (RSGGTSRHPGPL).

It belongs to the MHC class II family.

Its subcellular location is the membrane. The polypeptide is H-2 class II histocompatibility antigen, A-U alpha chain (H2-Aa) (Mus musculus (Mouse)).